Consider the following 347-residue polypeptide: MGDLSNRARKILFAAVTEFIATGDPVGSRTLARKYGLDLSAASIRNVLADLEEAGYLHQPHTSAGRIPTDRALRLFIDALVELRSLSPEQQAELSARFTEIYAGANDPLRETGRYLSELSGAAAVVAAPRAELRALAQLRFIPTKPGQLLAVLVFADGSVANRFISVDEAINEGELTRIHNLLTDVIEGRTLGEIRDLFARRLADERLQIDALRRRAFELGSKATADVTPRSEVVIEGQNRLIDLPEYADVDRLKKLMKALEEREELVDLLDRTLAAGAGEVTVFVGSEAGDLGGGQLSLVAAPYMENGRVAGTVGVLGPTRMDYAKVMPLVDATAAAMTEVRGKVK.

Belongs to the HrcA family.

Functionally, negative regulator of class I heat shock genes (grpE-dnaK-dnaJ and groELS operons). Prevents heat-shock induction of these operons. This chain is Heat-inducible transcription repressor HrcA, found in Sorangium cellulosum (strain So ce56) (Polyangium cellulosum (strain So ce56)).